The chain runs to 446 residues: SPARC-related modular calcium-binding protein 2 (446 aa).

An N-terminal signal peptide occupies residues 1–21; sequence MLLPQLCWLPLLAGLLPPVPA. Residues 34 to 86 enclose the Kazal-like domain; it reads QDKDKDCSLDCAGSPQKPLCASDGRTFLSRCEFQRAKCKDPQLEIAYRGNCKD. 6 cysteine pairs are disulfide-bonded: C40-C71, C44-C64, C53-C84, C90-C113, C124-C131, and C133-C153. The Thyroglobulin type-1 1 domain maps to 87–153; that stretch reads VSRCVAERKY…TAVAHKTPRC (67 aa). The segment at 147–228 is disordered; that stretch reads AHKTPRCPGS…EHQSALEEAK (82 aa). A compositionally biased stretch (basic and acidic residues) spans 161–172; it reads LPQREGTGKTDD. N206 carries an N-linked (GlcNAc...) asparagine glycan. Polar residues predominate over residues 206 to 216; the sequence is NKTNKNSVSSC. Residues 213–281 form the Thyroglobulin type-1 2 domain; the sequence is VSSCDQEHQS…TSTRYEQPKC (69 aa). Intrachain disulfides connect C216–C240, C251–C258, and C260–C281. Residues 217–228 show a composition bias toward basic and acidic residues; it reads DQEHQSALEEAK. EF-hand domains lie at 347-382 and 384-419; these read LEER…LRKK and KPKK…AKED. Ca(2+)-binding residues include D360, N362, S364, D366, E371, D397, N399, D401, S403, and E408. N-linked (GlcNAc...) asparagine glycosylation occurs at N362. The interval 416-446 is disordered; it reads AKEDGKADTKKRHTPRGHAESTSNRQPRKQG.

Binds various proteins from the extracellular matrix.

The protein resides in the secreted. It localises to the extracellular space. It is found in the extracellular matrix. The protein localises to the basement membrane. Promotes matrix assembly and cell adhesiveness. Can stimulate endothelial cell proliferation, migration, as well as angiogenesis. This chain is SPARC-related modular calcium-binding protein 2 (SMOC2), found in Homo sapiens (Human).